We begin with the raw amino-acid sequence, 133 residues long: Small ribosomal subunit protein uS8 (133 aa).

It belongs to the universal ribosomal protein uS8 family. As to quaternary structure, part of the 30S ribosomal subunit. Contacts proteins S5 and S12.

One of the primary rRNA binding proteins, it binds directly to 16S rRNA central domain where it helps coordinate assembly of the platform of the 30S subunit. This Leptospira borgpetersenii serovar Hardjo-bovis (strain JB197) protein is Small ribosomal subunit protein uS8.